The following is a 392-amino-acid chain: Aspartate aminotransferase (392 aa).

The L-aspartate site is built by G40, W126, and N176. An N6-(pyridoxal phosphate)lysine modification is found at K239.

The protein belongs to the class-I pyridoxal-phosphate-dependent aminotransferase family. As to quaternary structure, homodimer. The cofactor is pyridoxal 5'-phosphate.

The protein resides in the cytoplasm. The catalysed reaction is L-aspartate + 2-oxoglutarate = oxaloacetate + L-glutamate. This chain is Aspartate aminotransferase, found in Bacillus sp. (strain YM-2).